A 299-amino-acid polypeptide reads, in one-letter code: NAD kinase (299 aa).

Residue Asp-78 is the Proton acceptor of the active site. NAD(+)-binding positions include 78–79, 151–152, Lys-162, Arg-179, Asp-181, 192–197, and Gln-252; these read DG, ND, and TAYALS.

This sequence belongs to the NAD kinase family. The cofactor is a divalent metal cation.

It is found in the cytoplasm. It carries out the reaction NAD(+) + ATP = ADP + NADP(+) + H(+). Its function is as follows. Involved in the regulation of the intracellular balance of NAD and NADP, and is a key enzyme in the biosynthesis of NADP. Catalyzes specifically the phosphorylation on 2'-hydroxyl of the adenosine moiety of NAD to yield NADP. The sequence is that of NAD kinase from Coxiella burnetii (strain CbuG_Q212) (Coxiella burnetii (strain Q212)).